Reading from the N-terminus, the 475-residue chain is Ribulose bisphosphate carboxylase large chain (475 aa).

The propeptide occupies 1-2 (MS). Proline 3 is subject to N-acetylproline. Position 14 is an N6,N6,N6-trimethyllysine (lysine 14). The substrate site is built by asparagine 123 and threonine 173. The Proton acceptor role is filled by lysine 175. Residue lysine 177 coordinates substrate. Lysine 201, aspartate 203, and glutamate 204 together coordinate Mg(2+). Lysine 201 carries the post-translational modification N6-carboxylysine. Catalysis depends on histidine 294, which acts as the Proton acceptor. Substrate-binding residues include arginine 295, histidine 327, and serine 379.

The protein belongs to the RuBisCO large chain family. Type I subfamily. Heterohexadecamer of 8 large chains and 8 small chains; disulfide-linked. The disulfide link is formed within the large subunit homodimers. Mg(2+) is required as a cofactor. Post-translationally, the disulfide bond which can form in the large chain dimeric partners within the hexadecamer appears to be associated with oxidative stress and protein turnover.

Its subcellular location is the plastid. The protein resides in the chloroplast. It catalyses the reaction 2 (2R)-3-phosphoglycerate + 2 H(+) = D-ribulose 1,5-bisphosphate + CO2 + H2O. The catalysed reaction is D-ribulose 1,5-bisphosphate + O2 = 2-phosphoglycolate + (2R)-3-phosphoglycerate + 2 H(+). Its function is as follows. RuBisCO catalyzes two reactions: the carboxylation of D-ribulose 1,5-bisphosphate, the primary event in carbon dioxide fixation, as well as the oxidative fragmentation of the pentose substrate in the photorespiration process. Both reactions occur simultaneously and in competition at the same active site. The sequence is that of Ribulose bisphosphate carboxylase large chain from Zygnema circumcarinatum (Green alga).